Here is a 168-residue protein sequence, read N- to C-terminus: Pathogenesis-related protein 1B (168 aa).

Residues M1–A30 form the signal peptide. Positions L38–Y156 constitute an SCP domain.

This sequence belongs to the CRISP family. Post-translationally, three disulfide bonds are present.

Its subcellular location is the vacuole. In terms of biological role, probably involved in the defense reaction of plants against pathogens. The protein is Pathogenesis-related protein 1B of Nicotiana tabacum (Common tobacco).